We begin with the raw amino-acid sequence, 214 residues long: Serine protease inhibitor 2.1 (214 aa).

This sequence belongs to the serpin family.

The sequence is that of Serine protease inhibitor 2.1 from Rattus norvegicus (Rat).